A 396-amino-acid polypeptide reads, in one-letter code: Phosphoglycerate kinase (396 aa).

Residues 23-25 (DFN), Arg-38, 61-64 (HMGK), Arg-122, and Arg-155 contribute to the substrate site. Residues Lys-206, Gly-296, Glu-327, and 353-356 (GGDS) contribute to the ATP site.

The protein belongs to the phosphoglycerate kinase family. In terms of assembly, monomer.

The protein resides in the cytoplasm. The catalysed reaction is (2R)-3-phosphoglycerate + ATP = (2R)-3-phospho-glyceroyl phosphate + ADP. The protein operates within carbohydrate degradation; glycolysis; pyruvate from D-glyceraldehyde 3-phosphate: step 2/5. This is Phosphoglycerate kinase from Clostridium botulinum (strain Alaska E43 / Type E3).